A 200-amino-acid polypeptide reads, in one-letter code: Small ribosomal subunit protein eS8A (200 aa).

Residues 1 to 31 are disordered; it reads MGISRDSRHKRSATGAKRAQFRKKRKFELGR. The residue at position 62 (threonine 62) is a Phosphothreonine. 4 positions are modified to phosphoserine: serine 66, serine 69, serine 73, and serine 86. Threonine 107 carries the post-translational modification Phosphothreonine. A phosphoserine mark is found at serine 154, serine 155, serine 158, and serine 161.

It belongs to the eukaryotic ribosomal protein eS8 family. In terms of assembly, component of the small ribosomal subunit (SSU). Mature yeast ribosomes consist of a small (40S) and a large (60S) subunit. The 40S small subunit contains 1 molecule of ribosomal RNA (18S rRNA) and 33 different proteins (encoded by 57 genes). The large 60S subunit contains 3 rRNA molecules (25S, 5.8S and 5S rRNA) and 46 different proteins (encoded by 81 genes).

The protein resides in the cytoplasm. Its function is as follows. Component of the ribosome, a large ribonucleoprotein complex responsible for the synthesis of proteins in the cell. The small ribosomal subunit (SSU) binds messenger RNAs (mRNAs) and translates the encoded message by selecting cognate aminoacyl-transfer RNA (tRNA) molecules. The large subunit (LSU) contains the ribosomal catalytic site termed the peptidyl transferase center (PTC), which catalyzes the formation of peptide bonds, thereby polymerizing the amino acids delivered by tRNAs into a polypeptide chain. The nascent polypeptides leave the ribosome through a tunnel in the LSU and interact with protein factors that function in enzymatic processing, targeting, and the membrane insertion of nascent chains at the exit of the ribosomal tunnel. The chain is Small ribosomal subunit protein eS8A from Saccharomyces cerevisiae (strain ATCC 204508 / S288c) (Baker's yeast).